The primary structure comprises 216 residues: Ribosome maturation factor RimP (216 aa).

Belongs to the RimP family.

It is found in the cytoplasm. In terms of biological role, required for maturation of 30S ribosomal subunits. This chain is Ribosome maturation factor RimP, found in Bartonella henselae (strain ATCC 49882 / DSM 28221 / CCUG 30454 / Houston 1) (Rochalimaea henselae).